Reading from the N-terminus, the 309-residue chain is Probable manganese-dependent inorganic pyrophosphatase (309 aa).

Residues His-9, Asp-13, Asp-15, Asp-75, His-97, and Asp-149 each coordinate Mn(2+).

The protein belongs to the PPase class C family. It depends on Mn(2+) as a cofactor.

The protein localises to the cytoplasm. It carries out the reaction diphosphate + H2O = 2 phosphate + H(+). The sequence is that of Probable manganese-dependent inorganic pyrophosphatase from Staphylococcus epidermidis (strain ATCC 12228 / FDA PCI 1200).